A 110-amino-acid chain; its full sequence is UPF0060 membrane protein Francci3_2786 (110 aa).

The next 4 helical transmembrane spans lie at 8-28 (LLFV…WQGV), 33-53 (GPVW…VATL), 62-82 (ILAA…VAVD), and 87-107 (DRYD…IMYA).

The protein belongs to the UPF0060 family.

It is found in the cell membrane. In Frankia casuarinae (strain DSM 45818 / CECT 9043 / HFP020203 / CcI3), this protein is UPF0060 membrane protein Francci3_2786.